A 404-amino-acid chain; its full sequence is Argininosuccinate synthase (404 aa).

Residues 12 to 20 (AYSGGLDTS) and A39 each bind ATP. Y90 and S95 together coordinate L-citrulline. An ATP-binding site is contributed by G120. Residues T122, N126, and D127 each coordinate L-aspartate. N126 provides a ligand contact to L-citrulline. Positions 130, 181, 190, 266, and 278 each coordinate L-citrulline.

It belongs to the argininosuccinate synthase family. Type 1 subfamily. Homotetramer.

It is found in the cytoplasm. It carries out the reaction L-citrulline + L-aspartate + ATP = 2-(N(omega)-L-arginino)succinate + AMP + diphosphate + H(+). It participates in amino-acid biosynthesis; L-arginine biosynthesis; L-arginine from L-ornithine and carbamoyl phosphate: step 2/3. The protein is Argininosuccinate synthase of Rhodospirillum rubrum (strain ATCC 11170 / ATH 1.1.1 / DSM 467 / LMG 4362 / NCIMB 8255 / S1).